The primary structure comprises 399 residues: Homeobox protein ceh-39 (399 aa).

Disordered regions lie at residues P32 to E91 and A158 to S187. Residues S60–S79 are compositionally biased toward low complexity. The segment at residues N205 to K291 is a DNA-binding region (CUT). The homeobox DNA-binding region spans S315–K374.

Belongs to the CUT homeobox family. Expressed in hermaphrodite gonads.

The protein resides in the nucleus. The protein localises to the chromosome. In terms of biological role, transcriptional regulator which is involved in the sex determination and X chromosome dosage compensation pathways. Directly binds to 5'-ATTGAT-3' sites in the promoter of sex-determining factor xol-1 to negatively regulate its expression and promote hermaphrodite development. Associates with condensed DNA during mitosis. The chain is Homeobox protein ceh-39 from Caenorhabditis elegans.